The following is a 315-amino-acid chain: Three-prime repair exonuclease 1 (315 aa).

Residues Asp18 and Glu20 each contribute to the Mg(2+) site. 20–21 (EA) contacts substrate. Ser78 is modified (phosphoserine). Substrate is bound at residue Tyr129. Residue Ser167 is modified to Phosphoserine. His195 functions as the Proton donor/acceptor in the catalytic mechanism. Residue Asp200 participates in Mg(2+) binding. Asp200 lines the substrate pocket. The interval 236–315 (TTSTGTNPRP…YGLSLAMPGQ (80 aa)) is necessary for endoplasmic reticulum localization. Positions 243 to 315 (PRPSAVTATV…YGLSLAMPGQ (73 aa)) are interaction with UBQLN1. Residues 256 to 282 (RASDTGPNLRGDRSPKPAPSPKMCPGA) are disordered. The segment covering 271–282 (KPAPSPKMCPGA) has biased composition (pro residues). Residues 282-315 (APPGEGLLAPLGLLAFLTLAVAMLYGLSLAMPGQ) are necessary for cytoplasmic retention.

This sequence belongs to the exonuclease superfamily. TREX family. Homodimer. Interacts (via proline-rich region) with TCERG1/CA150 (via the second WW domain). Component of the SET complex, composed of at least ANP32A, APEX1, HMGB2, NME1, SET and TREX1. Within this complex, directly interacts with SET; this interaction does not result in TREX1 inhibition. Also interacts with NME1, but only following translocation to the nucleus. Directly interacts with UBQLN1 (via ubiquitin-like domain); the interaction may control TREX1 subcellular location. Mg(2+) serves as cofactor. Ubiquitinated, but not targeted to proteasomal degradation. Ubiquitination may be important for interaction with UBQLN1.

The protein resides in the nucleus. The protein localises to the cytoplasm. It is found in the cytosol. It localises to the endoplasmic reticulum membrane. It catalyses the reaction Exonucleolytic cleavage in the 3'- to 5'-direction to yield nucleoside 5'-phosphates.. Functionally, major cellular 3'-to-5' DNA exonuclease which digests single-stranded DNA (ssDNA) and double-stranded DNA (dsDNA) with mismatched 3' termini. Prevents cell-intrinsic initiation of autoimmunity. Acts by metabolizing DNA fragments from endogenous retroelements, including L1, LTR and SINE elements. Plays a key role in degradation of DNA fragments at cytosolic micronuclei arising from genome instability: its association with the endoplasmic reticulum membrane directs TREX1 to ruptured micronuclei, leading to micronuclear DNA degradation. Micronuclear DNA degradation is required to limit CGAS activation and subsequent inflammation. Unless degraded, these DNA fragments accumulate in the cytosol and activate the cGAS-STING innate immune signaling, leading to the production of type I interferon. Prevents chronic ATM-dependent checkpoint activation, by processing ssDNA polynucleotide species arising from the processing of aberrant DNA replication intermediates. Inefficiently degrades oxidized DNA, such as that generated upon antimicrobial reactive oxygen production or upon absorption of UV light. During GZMA-mediated cell death, contributes to DNA damage in concert with NME1. NME1 nicks one strand of DNA and TREX1 removes bases from the free 3' end to enhance DNA damage and prevent DNA end reannealing and rapid repair. In Bos taurus (Bovine), this protein is Three-prime repair exonuclease 1.